The chain runs to 163 residues: 5-hydroxymethyl-dUMP N-hydrolase (163 aa).

A2 bears the N-acetylalanine mark. G16 serves as a coordination point for 5-hydroxymethyl-dUMP. The residue at position 17 (S17) is a Phosphoserine. 5-hydroxymethyl-dUMP is bound by residues I18, R19, G20, S87, G89, and E93. At S87 the chain carries Phosphoserine. S112, S117, S127, and S158 each carry phosphoserine. S117 provides a ligand contact to 5-hydroxymethyl-dUMP.

Monomer and homodimer. Highly expressed in heart, kidney, liver and spleen. Weakly expressed in lung and skeletal muscle.

Its subcellular location is the cytoplasm. It localises to the nucleus. It catalyses the reaction 5-hydroxymethyl-dUMP + H2O = 5-hydroxymethyluracil + 2-deoxy-D-ribose 5-phosphate. In terms of biological role, part of a nucleotide salvage pathway that eliminates epigenetically modified 5-hydroxymethyl-dCMP (hmdCMP) in a two-step process entailing deamination to cytotoxic 5-hydroxymethyl-dUMP (hmdUMP), followed by its hydrolysis into 5-hydroxymethyluracil (hmU) and 2-deoxy-D-ribose 5-phosphate (deoxyribosephosphate). Catalyzes the second step in that pathway, the hydrolysis of the N-glycosidic bond in hmdUMP, degrading this cytotoxic nucleotide to avoid its genomic integration. This is 5-hydroxymethyl-dUMP N-hydrolase from Rattus norvegicus (Rat).